A 131-amino-acid polypeptide reads, in one-letter code: Small ribosomal subunit protein uS8 (131 aa).

This sequence belongs to the universal ribosomal protein uS8 family. Part of the 30S ribosomal subunit. Contacts proteins S5 and S12.

One of the primary rRNA binding proteins, it binds directly to 16S rRNA central domain where it helps coordinate assembly of the platform of the 30S subunit. The polypeptide is Small ribosomal subunit protein uS8 (Finegoldia magna (strain ATCC 29328 / DSM 20472 / WAL 2508) (Peptostreptococcus magnus)).